A 73-amino-acid chain; its full sequence is Cell division protein ZapB (73 aa).

Positions 3 to 69 form a coiled coil; the sequence is LELLSKLETK…EKVTGLVGLL (67 aa). The disordered stretch occupies residues 30 to 50; that stretch reads EKQKSSTLSEHNQQLNEQNQQ. Over residues 41–50 the composition is skewed to low complexity; it reads NQQLNEQNQQ.

Belongs to the ZapB family. In terms of assembly, homodimer. The ends of the coiled-coil dimer bind to each other, forming polymers. Interacts with FtsZ.

The protein localises to the cytoplasm. Functionally, non-essential, abundant cell division factor that is required for proper Z-ring formation. It is recruited early to the divisome by direct interaction with FtsZ, stimulating Z-ring assembly and thereby promoting cell division earlier in the cell cycle. Its recruitment to the Z-ring requires functional FtsA or ZipA. This is Cell division protein ZapB from Shewanella putrefaciens (strain CN-32 / ATCC BAA-453).